The primary structure comprises 212 residues: Fe/S biogenesis protein NfuA (212 aa).

2 residues coordinate [4Fe-4S] cluster: Cys-169 and Cys-172.

This sequence belongs to the NfuA family. Homodimer. It depends on [4Fe-4S] cluster as a cofactor.

Its function is as follows. Involved in iron-sulfur cluster biogenesis. Binds a 4Fe-4S cluster, can transfer this cluster to apoproteins, and thereby intervenes in the maturation of Fe/S proteins. Could also act as a scaffold/chaperone for damaged Fe/S proteins. This Acinetobacter baylyi (strain ATCC 33305 / BD413 / ADP1) protein is Fe/S biogenesis protein NfuA.